The primary structure comprises 65 residues: Large ribosomal subunit protein bL35 (65 aa).

2 disordered regions span residues 1 to 23 and 29 to 48; these read MPKI…GKVK and GSHI…RQSH. Basic residues predominate over residues 33 to 43; that stretch reads LAKKSRKRKRD.

Belongs to the bacterial ribosomal protein bL35 family.

This Desulfatibacillum aliphaticivorans protein is Large ribosomal subunit protein bL35.